The chain runs to 200 residues: H-2 class I histocompatibility antigen, Q9 alpha chain (200 aa).

Positions 1–21 (MALTMLLLLVAAALTLIETRA) are cleaved as a signal peptide. The segment at 22-111 (GQHSLQYFHT…AQSYYNQSKG (90 aa)) is alpha-1. Residues 22 to 200 (GQHSLQYFHT…RYLELGKETL (179 aa)) lie on the Extracellular side of the membrane. N107 carries N-linked (GlcNAc...) asparagine glycosylation. Residues 112–200 (GSHTLQWMYG…RYLELGKETL (89 aa)) are alpha-2. C122 and C185 are disulfide-bonded.

Belongs to the MHC class I family. In terms of assembly, heterodimer of an alpha chain and a beta chain (beta-2-microglobulin).

It is found in the membrane. Its function is as follows. Involved in the presentation of foreign antigens to the immune system. The chain is H-2 class I histocompatibility antigen, Q9 alpha chain (H2-Q9) from Mus musculus (Mouse).